A 339-amino-acid chain; its full sequence is Phenylalanine--tRNA ligase alpha subunit (339 aa).

Basic and acidic residues predominate over residues 1–14 (MEAKLKQLEEKAKQ). A disordered region spans residues 1–20 (MEAKLKQLEEKAKQDIQAST). Glu-254 contacts Mg(2+).

Belongs to the class-II aminoacyl-tRNA synthetase family. Phe-tRNA synthetase alpha subunit type 1 subfamily. In terms of assembly, tetramer of two alpha and two beta subunits. It depends on Mg(2+) as a cofactor.

The protein localises to the cytoplasm. It catalyses the reaction tRNA(Phe) + L-phenylalanine + ATP = L-phenylalanyl-tRNA(Phe) + AMP + diphosphate + H(+). The chain is Phenylalanine--tRNA ligase alpha subunit from Alkaliphilus metalliredigens (strain QYMF).